Reading from the N-terminus, the 470-residue chain is Ribulose bisphosphate carboxylase large chain (470 aa).

Residues Asn-115 and Thr-165 each contribute to the substrate site. The Proton acceptor role is filled by Lys-167. Residue Lys-169 participates in substrate binding. Residues Lys-193, Asp-195, and Glu-196 each contribute to the Mg(2+) site. Lys-193 is subject to N6-carboxylysine. Residue His-286 is the Proton acceptor of the active site. Residues Arg-287, His-319, and Ser-371 each contribute to the substrate site.

This sequence belongs to the RuBisCO large chain family. Type I subfamily. As to quaternary structure, heterohexadecamer of 8 large chains and 8 small chains. It depends on Mg(2+) as a cofactor.

The protein resides in the carboxysome. It carries out the reaction 2 (2R)-3-phosphoglycerate + 2 H(+) = D-ribulose 1,5-bisphosphate + CO2 + H2O. The enzyme catalyses D-ribulose 1,5-bisphosphate + O2 = 2-phosphoglycolate + (2R)-3-phosphoglycerate + 2 H(+). Its function is as follows. RuBisCO catalyzes two reactions: the carboxylation of D-ribulose 1,5-bisphosphate, the primary event in carbon dioxide fixation, as well as the oxidative fragmentation of the pentose substrate in the photorespiration process. Both reactions occur simultaneously and in competition at the same active site. This chain is Ribulose bisphosphate carboxylase large chain, found in Synechococcus sp. (strain CC9902).